A 212-amino-acid chain; its full sequence is Proheparin-binding EGF-like growth factor (212 aa).

The signal sequence occupies residues 1 to 18; sequence MDGRVVLIHALLTAVCSA. Residues 19–167 are Extracellular-facing; that stretch reads AVGKFGRDGP…PSTYDHTTAL (149 aa). The disordered stretch occupies residues 82 to 108; sequence SKPQGPVTPKKKGNGNKRRKGKGLGKK. Basic residues predominate over residues 90 to 106; it reads PKKKGNGNKRRKGKGLG. The EGF-like domain maps to 108 to 148; that stretch reads KRDPCLRKYKDFCIHGECKYIRELGAPSCICQPGYHGERCH. Cystine bridges form between Cys112–Cys125, Cys120–Cys136, and Cys138–Cys147. Positions 153 to 212 are cleaved as a propeptide — C-terminal; it reads PVEHPPSTYDHTTALAVVAVVLSSLCLVIITALLMFRCHKRGVYDVENEEKIKLGITVNH. A helical membrane pass occupies residues 168–188; the sequence is AVVAVVLSSLCLVIITALLMF. Topologically, residues 189 to 212 are cytoplasmic; sequence RCHKRGVYDVENEEKIKLGITVNH.

As to quaternary structure, interacts with CNIH2.

Its subcellular location is the secreted. The protein localises to the extracellular space. The protein resides in the cell membrane. Functionally, may be involved in macrophage-mediated cellular proliferation. It is mitogenic for fibroblasts and smooth muscle but not endothelial cells. It is able to bind EGF receptor/EGFR with higher affinity than EGF itself and is a far more potent mitogen for smooth muscle cells than EGF. Plays an important role in the proper development of cranial nerves by inhibiting the migration of the cranial neural crest cells (NCCs) into the odd-numbered neuromeres (r3 and r5) of the hindbrain Plays a role in mediating v-Jun-induced oncogenic transformation. The chain is Proheparin-binding EGF-like growth factor (HBEGF) from Gallus gallus (Chicken).